The chain runs to 682 residues: DNA-directed RNA polymerase subunit beta' (682 aa).

4 residues coordinate Zn(2+): cysteine 69, cysteine 71, cysteine 87, and cysteine 90. The Mg(2+) site is built by aspartate 491, aspartate 493, and aspartate 495.

Belongs to the RNA polymerase beta' chain family. RpoC1 subfamily. As to quaternary structure, in plastids the minimal PEP RNA polymerase catalytic core is composed of four subunits: alpha, beta, beta', and beta''. When a (nuclear-encoded) sigma factor is associated with the core the holoenzyme is formed, which can initiate transcription. The cofactor is Mg(2+). Zn(2+) serves as cofactor.

Its subcellular location is the plastid. It localises to the chloroplast. The enzyme catalyses RNA(n) + a ribonucleoside 5'-triphosphate = RNA(n+1) + diphosphate. DNA-dependent RNA polymerase catalyzes the transcription of DNA into RNA using the four ribonucleoside triphosphates as substrates. This Lotus japonicus (Lotus corniculatus var. japonicus) protein is DNA-directed RNA polymerase subunit beta'.